We begin with the raw amino-acid sequence, 132 residues long: Agouti-signaling protein (132 aa).

The N-terminal stretch at 1–22 (MDVTRLLLATLLVFLCFFAAYS) is a signal peptide. Residue N39 is glycosylated (N-linked (GlcNAc...) asparagine). Positions 61 to 93 (KISRKEAEKKRSSKKEASKQKVARPRTPLSVPC) are disordered. Residues 64–79 (RKEAEKKRSSKKEASK) show a composition bias toward basic and acidic residues. Disulfide bonds link C93-C108, C100-C114, C107-C125, C111-C132, and C116-C123. Residues 93–132 (CVSTRGSCKPPAPACCHPCASCQCRFFRSACSCRVLNVNC) enclose the Agouti domain.

It localises to the secreted. In terms of biological role, involved in the regulation of melanogenesis. The binding of ASP to MC1R precludes alpha-MSH initiated signaling and thus blocks production of cAMP, leading to a down-regulation of eumelanogenesis (brown/black pigment) and thus increasing synthesis of pheomelanin (yellow/red pigment). The protein is Agouti-signaling protein (ASIP) of Callithrix geoffroyi (Geoffroy's marmoset).